The chain runs to 660 residues: DNA mismatch repair protein MutL (660 aa).

Belongs to the DNA mismatch repair MutL/HexB family.

Its function is as follows. This protein is involved in the repair of mismatches in DNA. It is required for dam-dependent methyl-directed DNA mismatch repair. May act as a 'molecular matchmaker', a protein that promotes the formation of a stable complex between two or more DNA-binding proteins in an ATP-dependent manner without itself being part of a final effector complex. This is DNA mismatch repair protein MutL from Streptococcus equi subsp. zooepidemicus (strain H70).